The sequence spans 757 residues: RNA-directed RNA polymerase catalytic subunit (757 aa).

The segment at 52-82 (KGKWTTNTETGAPQLNPIDGPLPEDNEPSGY) is disordered. A compositionally biased stretch (polar residues) spans 55-64 (WTTNTETGAP). Short sequence motifs (nuclear localization signal) lie at residues 187–195 (RKRRVRDNM) and 203–216 (RTIG…NKKS). The tract at residues 249 to 256 (RGFVYFVE) is promoter-binding site. Positions 286–483 (VRKMMTNSQD…GINMSKKKSY (198 aa)) constitute a RdRp catalytic domain.

The protein belongs to the influenza viruses polymerase PB1 family. As to quaternary structure, influenza RNA polymerase is composed of three subunits: PB1, PB2 and PA. Interacts (via N-terminus) with PA (via C-terminus). Interacts (via C-terminus) with PB2 (via N-terminus); this interaction is essential for transcription initiation. Phosphorylated by host PRKCA.

It is found in the host nucleus. The protein resides in the host cytoplasm. The catalysed reaction is RNA(n) + a ribonucleoside 5'-triphosphate = RNA(n+1) + diphosphate. RNA-dependent RNA polymerase which is responsible for replication and transcription of virus RNA segments. The transcription of viral mRNAs occurs by a unique mechanism called cap-snatching. 5' methylated caps of cellular mRNAs are cleaved after 10-13 nucleotides by PA. In turn, these short capped RNAs are used as primers by PB1 for transcription of viral mRNAs. During virus replication, PB1 initiates RNA synthesis and copy vRNA into complementary RNA (cRNA) which in turn serves as a template for the production of more vRNAs. The protein is RNA-directed RNA polymerase catalytic subunit of Influenza A virus (strain A/Chicken/Shantou/4231/2003 H5N1 genotype V).